The chain runs to 260 residues: MMWSNFFLQEENRRRGAAGRRRAHGQGRSGLTPEREGKVKLALLLAAVGATLAVLSVGTEFWVELNTYKANGSAVCEAAHLGLWKACTKRLWQADVPVDRDTCGPAELPGEANCTYFKFFTTGENARIFQRTTKKEVNLAAAVIAVLGLAVMALGCLCIIMVLSKGAEFLLRVGAVCFGLSGLLLLVSLEVFRHSVRALLQRVSPEPPPAPRLTYEYSWSLGCGVGAGLILLLGAGCFLLLTLPSWPWGSLCPKRGHRAT.

Residues 14-33 (RRGAAGRRRAHGQGRSGLTP) are disordered. A compositionally biased stretch (basic residues) spans 15-25 (RGAAGRRRAHG). Helical transmembrane passes span 43–63 (LLLA…EFWV), 143–163 (VIAV…IMVL), 169–189 (FLLR…LVSL), and 221–241 (LGCG…FLLL).

The protein belongs to the PMP-22/EMP/MP20 family. CACNG subfamily. Interacts with CACNA1C. Identified in a complex with the L-type calcium channel subunits CACNA1C, CACNA2D1 and either CACNB1 or CACNB2. As to expression, detected in heart left ventricle.

The protein localises to the cell membrane. In terms of biological role, regulates the activity of L-type calcium channels that contain CACNA1C as pore-forming subunit. This chain is Voltage-dependent calcium channel gamma-6 subunit (CACNG6), found in Homo sapiens (Human).